The sequence spans 353 residues: Protein RecA (353 aa).

74–81 (GPESSGKT) provides a ligand contact to ATP.

The protein belongs to the RecA family.

The protein localises to the cytoplasm. In terms of biological role, can catalyze the hydrolysis of ATP in the presence of single-stranded DNA, the ATP-dependent uptake of single-stranded DNA by duplex DNA, and the ATP-dependent hybridization of homologous single-stranded DNAs. It interacts with LexA causing its activation and leading to its autocatalytic cleavage. The protein is Protein RecA of Bordetella bronchiseptica (strain ATCC BAA-588 / NCTC 13252 / RB50) (Alcaligenes bronchisepticus).